The primary structure comprises 195 residues: Probable septum site-determining protein MinC (195 aa).

Belongs to the MinC family. Interacts with MinD and FtsZ.

Its function is as follows. Cell division inhibitor that blocks the formation of polar Z ring septums. Rapidly oscillates between the poles of the cell to destabilize FtsZ filaments that have formed before they mature into polar Z rings. Prevents FtsZ polymerization. The sequence is that of Probable septum site-determining protein MinC from Helicobacter pylori (strain P12).